A 256-amino-acid polypeptide reads, in one-letter code: MAGGTIWKGYIHFADTDVAVKLHAAVKAERIQFHLLHKRDHVKLHQQMICAYEKIPVPTEAQTKGFEVEEGKYIIVDPDELEQTAPESSRMIEVHEFVKTGQIDPIFLDRVYYLEPDLHSEGYSELVGALQEMGAEGICTWTMRNRSYLGALQASGKILRLNTLRYADEVISVKSLELQESPVSEKELKIGSDLINQLTTPFQPQKFENEHEKKLQKLIEKKARGEKIALLRPRLLKPTASDKLLQALEESLKKVA.

The Ku domain occupies 13–184 (FADTDVAVKL…SLELQESPVS (172 aa)).

It belongs to the prokaryotic Ku family. In terms of assembly, homodimer. Interacts with LigD.

In terms of biological role, with LigD forms a non-homologous end joining (NHEJ) DNA repair enzyme, which repairs dsDNA breaks with reduced fidelity. Binds linear dsDNA with 5'- and 3'- overhangs but not closed circular dsDNA nor ssDNA. Recruits and stimulates the ligase activity of LigD. This Geotalea uraniireducens (strain Rf4) (Geobacter uraniireducens) protein is Non-homologous end joining protein Ku 2.